The primary structure comprises 156 residues: SsrA-binding protein (156 aa).

The segment at 127 to 156 (GKKKYDKREDLKKKDAKRDVDRAMRDRQKY) is disordered. Over residues 132–156 (DKREDLKKKDAKRDVDRAMRDRQKY) the composition is skewed to basic and acidic residues.

This sequence belongs to the SmpB family.

It is found in the cytoplasm. Functionally, required for rescue of stalled ribosomes mediated by trans-translation. Binds to transfer-messenger RNA (tmRNA), required for stable association of tmRNA with ribosomes. tmRNA and SmpB together mimic tRNA shape, replacing the anticodon stem-loop with SmpB. tmRNA is encoded by the ssrA gene; the 2 termini fold to resemble tRNA(Ala) and it encodes a 'tag peptide', a short internal open reading frame. During trans-translation Ala-aminoacylated tmRNA acts like a tRNA, entering the A-site of stalled ribosomes, displacing the stalled mRNA. The ribosome then switches to translate the ORF on the tmRNA; the nascent peptide is terminated with the 'tag peptide' encoded by the tmRNA and targeted for degradation. The ribosome is freed to recommence translation, which seems to be the essential function of trans-translation. The sequence is that of SsrA-binding protein from Exiguobacterium sp. (strain ATCC BAA-1283 / AT1b).